Here is a 1435-residue protein sequence, read N- to C-terminus: Protein SPP41 (1435 aa).

Disordered regions lie at residues 16–74, 88–265, 286–309, 322–424, 442–482, 519–708, and 934–972; these read VGNL…NIEI, VANA…ENTL, AKQT…VEAQ, ELLS…DDEF, ETST…DSLD, SVSD…MKVP, and QQLD…AGHT. Acidic residues predominate over residues 27 to 42; the sequence is GQEEGEVQGGEQEGDD. Basic and acidic residues-rich tracts occupy residues 53 to 63, 98 to 127, and 139 to 154; these read IEPKHPDDSQH, EQAK…KEQQ, and LKSD…ERRV. The region spanning 171-190 is the UIM domain; that stretch reads QDDENLRMAILESLQELNTN. Basic and acidic residues predominate over residues 196 to 205; it reads EPEKHEHAAP. Over residues 211 to 223 the composition is skewed to basic residues; that stretch reads SKKSSKKKKKDKS. Basic and acidic residues predominate over residues 224–234; sequence KNRESSKDKSS. Residues 235–249 show a composition bias toward basic residues; the sequence is KKSKSSSHSKKHAKD. Residues 286–301 are compositionally biased toward polar residues; that stretch reads AKQTVDIQDNSHTDNT. A compositionally biased stretch (basic and acidic residues) spans 345–355; sequence KAVEPPRKPTA. Over residues 367 to 383 the composition is skewed to basic residues; the sequence is KPKKRPPQEKKKTKSKT. Over residues 384-398 the composition is skewed to low complexity; the sequence is SKAASTANKSPASES. Composition is skewed to polar residues over residues 442-451 and 459-482; these read ETSTHTATQD and DFTS…DSLD. Basic and acidic residues-rich tracts occupy residues 524-548, 610-628, and 637-652; these read LPHD…EKKT, KNKE…AREE, and KQRL…KIVE. Positions 665 to 674 are enriched in basic residues; sequence KSGKPKKPYR. The segment covering 676-691 has biased composition (basic and acidic residues); sequence WTPEELLKRSQEAEKP. The Nuclear localization signal signature appears at 683 to 699; it reads KRSQEAEKPRKVKKERK. A compositionally biased stretch (basic residues) spans 692-706; sequence RKVKKERKKKEKKMK. Residue K981 forms a Glycyl lysine isopeptide (Lys-Gly) (interchain with G-Cter in SUMO) linkage. The span at 1005–1014 shows a compositional bias: basic and acidic residues; it reads KLELTKRAES. The disordered stretch occupies residues 1005–1125; sequence KLELTKRAES…DSVNTTTGKP (121 aa). S1014 bears the Phosphoserine mark. Residues 1021-1032 show a composition bias toward polar residues; the sequence is NVETAKETQSVQ. Composition is skewed to basic and acidic residues over residues 1033 to 1082 and 1091 to 1103; these read EIKE…EKIA and LSDK…KSTL. S1067 bears the Phosphoserine mark. The span at 1108–1123 shows a compositional bias: polar residues; sequence AQLTGNEPDSVNTTTG. K1154 is covalently cross-linked (Glycyl lysine isopeptide (Lys-Gly) (interchain with G-Cter in SUMO)).

Interacts with PRP8 and RAP1.

The protein resides in the nucleus. Negative regulator of PRP3 and PRP4 genes. The chain is Protein SPP41 (SPP41) from Saccharomyces cerevisiae (strain ATCC 204508 / S288c) (Baker's yeast).